We begin with the raw amino-acid sequence, 874 residues long: Probable inorganic carbon transporter subunit DabA (874 aa).

The Zn(2+) site is built by Cys398, Asp400, His580, and Cys595.

It belongs to the inorganic carbon transporter (TC 9.A.2) DabA family. In terms of assembly, forms a complex with DabB. Zn(2+) serves as cofactor.

The protein resides in the cell membrane. In terms of biological role, part of an energy-coupled inorganic carbon pump. The sequence is that of Probable inorganic carbon transporter subunit DabA from Bacillus thuringiensis subsp. konkukian (strain 97-27).